The sequence spans 1715 residues: Pentafunctional AROM polypeptide (1715 aa).

Positions M1 to P17 are enriched in polar residues. The tract at residues M1 to D26 is disordered. The tract at residues M1 to D421 is 3-dehydroquinate synthase. NAD(+)-binding positions include D71–N73, E112–K115, G143–V145, and D148. A 7-phospho-2-dehydro-3-deoxy-D-arabino-heptonate-binding site is contributed by R159. T168–T169 provides a ligand contact to NAD(+). Positions 175 and 181 each coordinate 7-phospho-2-dehydro-3-deoxy-D-arabino-heptonate. Position 190 (K190) interacts with NAD(+). A 7-phospho-2-dehydro-3-deoxy-D-arabino-heptonate-binding site is contributed by N191. Residues W208–T211 and N219 each bind NAD(+). E223 is a binding site for Zn(2+). 7-phospho-2-dehydro-3-deoxy-D-arabino-heptonate is bound by residues E223–K226 and K287. E297 functions as the Proton acceptor; for 3-dehydroquinate synthase activity in the catalytic mechanism. 7-phospho-2-dehydro-3-deoxy-D-arabino-heptonate-binding positions include R301 to N305 and H308. Zn(2+) is bound at residue H308. The active-site Proton acceptor; for 3-dehydroquinate synthase activity is H312. Positions 324 and 393 each coordinate 7-phospho-2-dehydro-3-deoxy-D-arabino-heptonate. A Zn(2+)-binding site is contributed by H324. An EPSP synthase region spans residues V434 to I895. Catalysis depends on C877, which acts as the For EPSP synthase activity. A shikimate kinase region spans residues H948–S1165. Residue G955–T962 coordinates ATP. The segment at L1166–Q1389 is 3-dehydroquinase. Residue H1292 is the Proton acceptor; for 3-dehydroquinate dehydratase activity of the active site. Residue K1320 is the Schiff-base intermediate with substrate; for 3-dehydroquinate dehydratase activity of the active site. The shikimate dehydrogenase stretch occupies residues A1402–C1715.

The protein in the N-terminal section; belongs to the sugar phosphate cyclases superfamily. Dehydroquinate synthase family. This sequence in the 2nd section; belongs to the EPSP synthase family. It in the 3rd section; belongs to the shikimate kinase family. In the 4th section; belongs to the type-I 3-dehydroquinase family. The protein in the C-terminal section; belongs to the shikimate dehydrogenase family. In terms of assembly, homodimer. Requires Zn(2+) as cofactor.

The protein localises to the cytoplasm. It catalyses the reaction 7-phospho-2-dehydro-3-deoxy-D-arabino-heptonate = 3-dehydroquinate + phosphate. The enzyme catalyses 3-dehydroquinate = 3-dehydroshikimate + H2O. It carries out the reaction shikimate + NADP(+) = 3-dehydroshikimate + NADPH + H(+). The catalysed reaction is shikimate + ATP = 3-phosphoshikimate + ADP + H(+). It catalyses the reaction 3-phosphoshikimate + phosphoenolpyruvate = 5-O-(1-carboxyvinyl)-3-phosphoshikimate + phosphate. It participates in metabolic intermediate biosynthesis; chorismate biosynthesis; chorismate from D-erythrose 4-phosphate and phosphoenolpyruvate: step 2/7. Its pathway is metabolic intermediate biosynthesis; chorismate biosynthesis; chorismate from D-erythrose 4-phosphate and phosphoenolpyruvate: step 3/7. It functions in the pathway metabolic intermediate biosynthesis; chorismate biosynthesis; chorismate from D-erythrose 4-phosphate and phosphoenolpyruvate: step 4/7. The protein operates within metabolic intermediate biosynthesis; chorismate biosynthesis; chorismate from D-erythrose 4-phosphate and phosphoenolpyruvate: step 5/7. It participates in metabolic intermediate biosynthesis; chorismate biosynthesis; chorismate from D-erythrose 4-phosphate and phosphoenolpyruvate: step 6/7. The AROM polypeptide catalyzes 5 consecutive enzymatic reactions in prechorismate polyaromatic amino acid biosynthesis. In Mycosarcoma maydis (Corn smut fungus), this protein is Pentafunctional AROM polypeptide.